We begin with the raw amino-acid sequence, 322 residues long: NADH-cytochrome b5 reductase 2 (322 aa).

The helical transmembrane segment at 30-46 threads the bilayer; that stretch reads LAPVYVAVGLAGLGVGL. The 106-residue stretch at 71–176 folds into the FAD-binding FR-type domain; that stretch reads QGWVNLKLSD…KGPLPKYPWE (106 aa). 179 to 214 contacts FAD; sequence KHKHICLVAGGTGITPMYQLAREIFKNPEDKTKVTL.

This sequence belongs to the flavoprotein pyridine nucleotide cytochrome reductase family. The cofactor is FAD.

It localises to the mitochondrion outer membrane. The enzyme catalyses 2 Fe(III)-[cytochrome b5] + NADH = 2 Fe(II)-[cytochrome b5] + NAD(+) + H(+). Functionally, may mediate the reduction of outer membrane cytochrome b5. This is NADH-cytochrome b5 reductase 2 (mcr1) from Emericella nidulans (strain FGSC A4 / ATCC 38163 / CBS 112.46 / NRRL 194 / M139) (Aspergillus nidulans).